Consider the following 253-residue polypeptide: MLASRVIPCLDIDHGRVVKGVQFVALRDAGDPVEVAKRYNDEGADEITFLDISASYEERGTLADMVSAVAAQVFIPLTVGGGVRCVEDIRTLLLAGADKVSINSAAVNDPELVRAAARRFGNSCIVVAIDAKRVEDHWEVFTHGGRRGTGLDAVAWAQRMAAYGAGEILLTSMDRDGTGIGFDLALTRAISDAVPVPVIASGGVGEIRHFVEGIQQGRADAVLAASVFHFGQFRISEVKARMAAAGIPVRTTR.

Residues Asp-11 and Asp-130 contribute to the active site.

It belongs to the HisA/HisF family. Heterodimer of HisH and HisF.

The protein localises to the cytoplasm. The enzyme catalyses 5-[(5-phospho-1-deoxy-D-ribulos-1-ylimino)methylamino]-1-(5-phospho-beta-D-ribosyl)imidazole-4-carboxamide + L-glutamine = D-erythro-1-(imidazol-4-yl)glycerol 3-phosphate + 5-amino-1-(5-phospho-beta-D-ribosyl)imidazole-4-carboxamide + L-glutamate + H(+). It functions in the pathway amino-acid biosynthesis; L-histidine biosynthesis; L-histidine from 5-phospho-alpha-D-ribose 1-diphosphate: step 5/9. IGPS catalyzes the conversion of PRFAR and glutamine to IGP, AICAR and glutamate. The HisF subunit catalyzes the cyclization activity that produces IGP and AICAR from PRFAR using the ammonia provided by the HisH subunit. This chain is Imidazole glycerol phosphate synthase subunit HisF, found in Acidithiobacillus ferrooxidans (strain ATCC 23270 / DSM 14882 / CIP 104768 / NCIMB 8455) (Ferrobacillus ferrooxidans (strain ATCC 23270)).